The chain runs to 350 residues: C-X-C chemokine receptor type 1 (350 aa).

Residues 1 to 39 (MSNITDPQMWDFDDLNFTGMPPADEDYSPCMLETETLNK) lie on the Extracellular side of the membrane. N-linked (GlcNAc...) asparagine glycans are attached at residues Asn-3 and Asn-16. Residues 40 to 66 (YVVIIAYALVFLLSLLGNSLVMLVILY) form a helical membrane-spanning segment. At 67–75 (SRVGRSVTD) the chain is on the cytoplasmic side. A helical membrane pass occupies residues 76–96 (VYLLNLALADLLFALTLPIWA). At 97-111 (ASKVNGWIFGTFLCK) the chain is on the extracellular side. A disulfide bridge connects residues Cys-110 and Cys-187. Residues 112 to 133 (VVSLLKEVNFYSGILLLACISV) form a helical membrane-spanning segment. The Cytoplasmic segment spans residues 134–154 (DRYLAIVHATRTLTQKRHLVK). Residues 155–174 (FVCLGCWGLSMNLSLPFFLF) form a helical membrane-spanning segment. Residues 175-199 (RQAYHPNNSSPVCYEVLGNDTAKWR) lie on the Extracellular side of the membrane. A helical transmembrane segment spans residues 200–220 (MVLRILPHTFGFIVPLFVMLF). Residues 221-242 (CYGFTLRTLFKAHMGQKHRAMR) are Cytoplasmic-facing. A helical membrane pass occupies residues 243-264 (VIFAVVLIFLLCWLPYNLVLLA). The Extracellular portion of the chain corresponds to 265 to 285 (DTLMRTQVIQESCERRNNIGR). The chain crosses the membrane as a helical span at residues 286–308 (ALDATEILGFLHSCLNPIIYAFI). The Cytoplasmic portion of the chain corresponds to 309-350 (GQNFRHGFLKILAMHGLVSKEFLARHRVTSYTSSSVNVSSNL).

The protein belongs to the G-protein coupled receptor 1 family. Interacts with IL8. Interacts with GNAI2.

It localises to the cell membrane. Its function is as follows. Receptor to interleukin-8, which is a powerful neutrophils chemotactic factor. Binding of IL-8 to the receptor causes activation of neutrophils. This response is mediated via a G-protein that activates a phosphatidylinositol-calcium second messenger system. This Homo sapiens (Human) protein is C-X-C chemokine receptor type 1 (CXCR1).